Consider the following 510-residue polypeptide: Aromatic-L-amino-acid decarboxylase (510 aa).

Over residues 1 to 17 (MSHIPISNTIPPKQTDG) the composition is skewed to polar residues. Residues 1–29 (MSHIPISNTIPPKQTDGNGKANISPDKLD) are disordered. Residue T117 participates in substrate binding. Residues A183, S184, H227, D305, and N334 each contribute to the pyridoxal 5'-phosphate site. H227 lines the substrate pocket. Residue K337 is modified to N6-(pyridoxal phosphate)lysine. The segment at 358–384 (NAFNVDPLYLKHDMQGSAPDYRHWQIP) is disordered.

It belongs to the group II decarboxylase family. Homodimer. Requires pyridoxal 5'-phosphate as cofactor.

It catalyses the reaction L-dopa + H(+) = dopamine + CO2. The enzyme catalyses 5-hydroxy-L-tryptophan + H(+) = serotonin + CO2. Its function is as follows. Catalyzes the decarboxylation of L-3,4-dihydroxyphenylalanine (L-DOPA) to dopamine and L-5-hydroxytryptophan (5-HTP) to serotonin. Catalyzes the formation of serotonin more efficiently than dopamine. Displays no activity to tyrosine. Variation in the synthesis of bioamines may be a factor contributing to natural variation in life span. This chain is Aromatic-L-amino-acid decarboxylase (Ddc), found in Drosophila simulans (Fruit fly).